We begin with the raw amino-acid sequence, 111 residues long: Cytochrome c (111 aa).

Ala1 carries the post-translational modification N-acetylalanine. Heme c is bound by residues Cys22, Cys25, and His26. Lys80 bears the N6,N6,N6-trimethyllysine mark. Met88 lines the heme c pocket. Lys94 carries the post-translational modification N6,N6,N6-trimethyllysine.

The protein belongs to the cytochrome c family. In terms of processing, binds 1 heme c group covalently per subunit.

The protein localises to the mitochondrion intermembrane space. Functionally, electron carrier protein. The oxidized form of the cytochrome c heme group can accept an electron from the heme group of the cytochrome c1 subunit of cytochrome reductase. Cytochrome c then transfers this electron to the cytochrome oxidase complex, the final protein carrier in the mitochondrial electron-transport chain. In Nigella damascena (Love-in-a-mist), this protein is Cytochrome c.